The primary structure comprises 179 residues: Large ribosomal subunit protein uL6 (179 aa).

It belongs to the universal ribosomal protein uL6 family. As to quaternary structure, part of the 50S ribosomal subunit.

In terms of biological role, this protein binds to the 23S rRNA, and is important in its secondary structure. It is located near the subunit interface in the base of the L7/L12 stalk, and near the tRNA binding site of the peptidyltransferase center. The polypeptide is Large ribosomal subunit protein uL6 (Gemmatimonas aurantiaca (strain DSM 14586 / JCM 11422 / NBRC 100505 / T-27)).